A 167-amino-acid chain; its full sequence is Outer envelope pore protein 21A, chloroplastic (167 aa).

At 1-21 (METSLRYATNSRSLKIHAKEK) the chain is on the cytoplasmic side. Residues 22 to 31 (FPVNSKTRLQ) traverse the membrane as a beta stranded segment. Over 32–55 (LHGELDTGAGVPSYFCAMIRYFFH) the chain is Chloroplast intermembrane. Residues 56 to 65 (EASTNLGVGL) form a beta stranded membrane-spanning segment. Residues 66-71 (HYDKRE) lie on the Cytoplasmic side of the membrane. Residues 72–81 (KLRCLVRGKK) form a beta stranded membrane-spanning segment. Over 82 to 87 (KFPVIT) the chain is Chloroplast intermembrane. The chain crosses the membrane as a beta stranded span at residues 88–97 (DEVVTFNIKG). At 98–110 (RCDFDQDLVQRNA) the chain is on the cytoplasmic side. A beta stranded membrane pass occupies residues 111–120 (KGAAEFDWNI). Topologically, residues 121 to 127 (WKFQKDQ) are chloroplast intermembrane. Residues 128–137 (DLRLRIGYEM) form a beta stranded membrane-spanning segment. Residues 138–142 (FEKVP) lie on the Cytoplasmic side of the membrane. The beta stranded transmembrane segment at 143-152 (YMQIRENNWT) threads the bilayer. Residues 153–158 (FNTNLK) are Chloroplast intermembrane-facing. The beta stranded transmembrane segment at 159 to 167 (GKWNVRYDL) threads the bilayer.

The protein belongs to the plastid outer envelope porin OEP21 (TC 1.B.29) family.

It localises to the plastid. The protein resides in the etioplast membrane. The protein localises to the chloroplast outer membrane. Voltage-dependent rectifying anion channel that facilitates the translocation between chloroplast and cytoplasm of phosphorylated carbohydrates such as triosephosphate, 3-phosphoglycerate and inorganic phosphate (Pi) depending of ATP to triosephosphate ratio in the plastidial intermembrane space; in high triosephosphate/ATP conditions (e.g. photosynthesis), export of triosphosphate from chloroplast (outward rectifying channels), but in high ATP/triosephosphate conditions (e.g. dark phase), import of phosphosolutes (inward rectifying channels). In Arabidopsis thaliana (Mouse-ear cress), this protein is Outer envelope pore protein 21A, chloroplastic (OEP21A).